A 712-amino-acid chain; its full sequence is Amine oxidase [copper-containing] gamma 1 (712 aa).

The signal sequence occupies residues 1 to 24; that stretch reads MAEPSFARLFLLFFSFLLIFATYS. Residues Asn-146 and Asn-173 are each glycosylated (N-linked (GlcNAc...) asparagine). The cysteines at positions 188 and 210 are disulfide-linked. 352–363 contacts substrate; it reads YMDAGELGLGPT. Residue Asp-354 is the Proton acceptor of the active site. Cys-373 and Cys-399 are oxidised to a cystine. 439–444 contacts substrate; it reads VGNYDY. Tyr-442 serves as the catalytic Schiff-base intermediate with substrate; via topaquinone. Tyr-442 carries the 2',4',5'-topaquinone modification. Residues His-499 and His-501 each coordinate Cu cation. Asp-508, Met-509, and Asp-510 together coordinate Mn(2+). N-linked (GlcNAc...) asparagine glycans are attached at residues Asn-516 and Asn-617. Mn(2+)-binding residues include Asp-651 and Ile-652. Residue His-662 coordinates Cu cation.

This sequence belongs to the copper/topaquinone oxidase family. Homodimer. Cu cation serves as cofactor. It depends on Zn(2+) as a cofactor. Requires L-topaquinone as cofactor. Mn(2+) is required as a cofactor. Topaquinone (TPQ) is generated by copper-dependent autoxidation of a specific tyrosyl residue. Mostly expressed in roots, stems and flowers, and, at lower levels, in leaves and cotyledons.

It localises to the secreted. The protein resides in the extracellular space. The protein localises to the apoplast. It catalyses the reaction a primary methyl amine + O2 + H2O = an aldehyde + H2O2 + NH4(+). It participates in amine and polyamine degradation; putrescine degradation. Copper amine oxidase that can use putrescine and spermidine as substrates. Required for abscisic acid- (ABA) and polyamine- (PA) and H(2)O(2)-dependent induced nitric oxide (NO) biosynthesis. Involved in ABA signal transduction and in responses to osmotic stress. The protein is Amine oxidase [copper-containing] gamma 1 of Arabidopsis thaliana (Mouse-ear cress).